Consider the following 375-residue polypeptide: Adiponectin receptor protein 1 (375 aa).

Residues 1-60 are disordered; it reads MSSHKGSVVAQGNGAPASNREADTVELAELGPLLEEKGKRVIANPPKAEEEQTCPVPQEE. Residues 1-136 are Cytoplasmic-facing; that stretch reads MSSHKGSVVA…SIFRIHTETG (136 aa). A helical membrane pass occupies residues 137–157; sequence NIWTHLLGFVLFLFLGILTML. Residues 158–170 are Extracellular-facing; the sequence is RPNMYFMAPLQEK. The helical transmembrane segment at 171 to 191 threads the bilayer; that stretch reads VVFGMFFLGAVLCLSFSWLFH. Residue H191 participates in Zn(2+) binding. At 192–203 the chain is on the cytoplasmic side; the sequence is TVYCHSEKVSRT. A helical transmembrane segment spans residues 204-224; it reads FSKLDYSGIALLIMGSFVPWL. Topologically, residues 225–234 are extracellular; that stretch reads YYSFYCSPQP. Residues 235–255 traverse the membrane as a helical segment; the sequence is RLIYLSIVCVLGISAIIVAQW. The Cytoplasmic segment spans residues 256 to 264; that stretch reads DRFATPKHR. A helical transmembrane segment spans residues 265 to 285; it reads QTRAGVFLGLGLSGVVPTMHF. The Extracellular portion of the chain corresponds to 286–298; the sequence is TIAEGFVKATTVG. The helical transmembrane segment at 299–319 threads the bilayer; the sequence is QMGWFFLMAVMYITGAGLYAA. At 320–337 the chain is on the cytoplasmic side; that stretch reads RIPERFFPGKFDIWFQSH. H337 and H341 together coordinate Zn(2+). A helical membrane pass occupies residues 338 to 358; that stretch reads QIFHVLVVAAAFVHFYGVSNL. Over 359–375 the chain is Extracellular; sequence QEFRYGLEGGCTDDTLL.

This sequence belongs to the ADIPOR family. In terms of assembly, may form homooligomers and heterooligomers with ADIPOR2. Interacts with APPL2 (via BAR domain); hinders the accessibility of APPL1 to ADIPOR1; negatively regulates adiponectin signaling; ADIPOQ dissociates this interaction and facilitates the recruitment of APPL1 to ADIPOR1. Interacts with APPL1; ADIPOQ enhances this interaction; inhibites adiponectin-stimulated binding of APPL2 to ADIPOR1. Widely expressed. Highly expressed in heart and skeletal muscle. Expressed at intermediate level in brain, spleen, kidney, liver, placenta, lung and peripheral blood leukocytes. Weakly expressed in colon, thymus and small intestine.

It is found in the cell membrane. Functionally, receptor for ADIPOQ, an essential hormone secreted by adipocytes that regulates glucose and lipid metabolism. Required for normal glucose and fat homeostasis and for maintaining a normal body weight. ADIPOQ-binding activates a signaling cascade that leads to increased AMPK activity, and ultimately to increased fatty acid oxidation, increased glucose uptake and decreased gluconeogenesis. Has high affinity for globular adiponectin and low affinity for full-length adiponectin. The sequence is that of Adiponectin receptor protein 1 from Homo sapiens (Human).